The primary structure comprises 242 residues: DNA repair protein RecO (242 aa).

This sequence belongs to the RecO family. As to quaternary structure, monomer.

In terms of biological role, involved in DNA repair and RecF pathway recombination. This chain is DNA repair protein RecO, found in Shigella boydii serotype 18 (strain CDC 3083-94 / BS512).